We begin with the raw amino-acid sequence, 87 residues long: Small ribosomal subunit protein bS20 (87 aa).

The segment at 1 to 27 is disordered; it reads MANIKSAKKRAIQSEKRRQHNASRRSM.

It belongs to the bacterial ribosomal protein bS20 family.

Its function is as follows. Binds directly to 16S ribosomal RNA. This Aeromonas salmonicida (strain A449) protein is Small ribosomal subunit protein bS20.